The chain runs to 335 residues: Leukocyte cell-derived chemotaxin 1 (335 aa).

Residues 45 to 65 (VVLISGAVLLLLGAIGAFYFW) form a helical membrane-spanning segment. Residues 104–201 (GSGAEEAVEV…LCGDLPIFWL (98 aa)) form the BRICHOS domain. Cys-131 and Cys-193 are joined by a disulfide. Residues 211–214 (RERR) constitute a propeptide that is removed on maturation. The tract at residues 221 to 269 (VTTTTTRRLRSGPQGTPAPGRPNNGTRPSVQEDAEPFNPDNPYHQQEGE) is disordered. The N-linked (GlcNAc...) asparagine; in variant 223-N-E-224 glycan is linked to Thr-223. Residue Thr-236 is glycosylated (O-linked (GalNAc...) threonine; partial). An N-linked (GlcNAc...) asparagine glycan is attached at Asn-244. Intrachain disulfides connect Cys-283–Cys-287, Cys-284–Cys-324, Cys-294–Cys-318, and Cys-298–Cys-314.

Belongs to the chondromodulin-1 family. Post-translationally, after cleavage, the post-translationally modified ChM-I is secreted as a glycoprotein. Two other smaller nonglycosylated chondromodulin forms (9 kDa and 7 kDa) are found either in developing articular cartilage or in chondrocytes. The 9 kDa form could be processed by an extracellular matrix-associated protease as a metalloproteinase and the 7 kDa form could be processed intracellularly. As to expression, nasal and articular cartilage, and fetal epiphysis.

The protein resides in the secreted. It is found in the extracellular space. The protein localises to the extracellular matrix. It localises to the endomembrane system. Functionally, bifunctional growth regulator that stimulates the growth of cultured chondrocytes in the presence of basic fibroblast growth factor (FGF) but inhibits the growth of cultured vascular endothelial cells. May contribute to the rapid growth of cartilage and vascular invasion prior to the replacement of cartilage by bone during endochondral bone development. Inhibits in vitro tube formation and mobilization of endothelial cells. Plays a role as antiangiogenic factor in cardiac valves to suppress neovascularization. This is Leukocyte cell-derived chemotaxin 1 from Bos taurus (Bovine).